The chain runs to 593 residues: Proline--tRNA ligase (593 aa).

The protein belongs to the class-II aminoacyl-tRNA synthetase family. ProS type 1 subfamily. Homodimer.

The protein localises to the cytoplasm. The catalysed reaction is tRNA(Pro) + L-proline + ATP = L-prolyl-tRNA(Pro) + AMP + diphosphate. Its function is as follows. Catalyzes the attachment of proline to tRNA(Pro) in a two-step reaction: proline is first activated by ATP to form Pro-AMP and then transferred to the acceptor end of tRNA(Pro). As ProRS can inadvertently accommodate and process non-cognate amino acids such as alanine and cysteine, to avoid such errors it has two additional distinct editing activities against alanine. One activity is designated as 'pretransfer' editing and involves the tRNA(Pro)-independent hydrolysis of activated Ala-AMP. The other activity is designated 'posttransfer' editing and involves deacylation of mischarged Ala-tRNA(Pro). The misacylated Cys-tRNA(Pro) is not edited by ProRS. The sequence is that of Proline--tRNA ligase from Synechococcus sp. (strain CC9605).